The chain runs to 85 residues: Antitoxin VapB4 (85 aa).

The protein belongs to the phD/YefM antitoxin family. In terms of assembly, interacts with cognate toxin VapC4.

Functionally, antitoxin component of a type II toxin-antitoxin (TA) system. Antitoxin that counteracts the effect of the VapC4 toxin. In Mycobacterium tuberculosis (strain CDC 1551 / Oshkosh), this protein is Antitoxin VapB4 (vapB4).